The primary structure comprises 445 residues: UPF0210 protein SSA_2018 (445 aa).

This sequence belongs to the UPF0210 family. Homodimer.

In Streptococcus sanguinis (strain SK36), this protein is UPF0210 protein SSA_2018.